The sequence spans 361 residues: Dihydroorotate dehydrogenase (quinone) (361 aa).

FMN-binding positions include 69 to 73 and threonine 93; that span reads AGFDK. Substrate is bound at residue lysine 73. 118–122 serves as a coordination point for substrate; it reads NRLGF. Asparagine 147 and asparagine 180 together coordinate FMN. Asparagine 180 lines the substrate pocket. Serine 183 acts as the Nucleophile in catalysis. Asparagine 185 lines the substrate pocket. 2 residues coordinate FMN: lysine 221 and threonine 249. 250-251 contributes to the substrate binding site; it reads NT. FMN is bound by residues glycine 271, glycine 300, and 321–322; that span reads YT.

This sequence belongs to the dihydroorotate dehydrogenase family. Type 2 subfamily. In terms of assembly, monomer. It depends on FMN as a cofactor.

It is found in the cell membrane. The catalysed reaction is (S)-dihydroorotate + a quinone = orotate + a quinol. The protein operates within pyrimidine metabolism; UMP biosynthesis via de novo pathway; orotate from (S)-dihydroorotate (quinone route): step 1/1. Functionally, catalyzes the conversion of dihydroorotate to orotate with quinone as electron acceptor. The protein is Dihydroorotate dehydrogenase (quinone) of Roseiflexus sp. (strain RS-1).